Reading from the N-terminus, the 92-residue chain is DNA-directed RNA polymerase subunit omega (92 aa).

The protein belongs to the RNA polymerase subunit omega family. In terms of assembly, the RNAP catalytic core consists of 2 alpha, 1 beta, 1 beta' and 1 omega subunit. When a sigma factor is associated with the core the holoenzyme is formed, which can initiate transcription.

The enzyme catalyses RNA(n) + a ribonucleoside 5'-triphosphate = RNA(n+1) + diphosphate. Functionally, promotes RNA polymerase assembly. Latches the N- and C-terminal regions of the beta' subunit thereby facilitating its interaction with the beta and alpha subunits. The protein is DNA-directed RNA polymerase subunit omega of Shewanella frigidimarina (strain NCIMB 400).